A 360-amino-acid chain; its full sequence is Phenylalanine--tRNA ligase alpha subunit (360 aa).

Mg(2+) is bound at residue E260.

The protein belongs to the class-II aminoacyl-tRNA synthetase family. Phe-tRNA synthetase alpha subunit type 1 subfamily. In terms of assembly, tetramer of two alpha and two beta subunits. Requires Mg(2+) as cofactor.

The protein localises to the cytoplasm. It catalyses the reaction tRNA(Phe) + L-phenylalanine + ATP = L-phenylalanyl-tRNA(Phe) + AMP + diphosphate + H(+). The polypeptide is Phenylalanine--tRNA ligase alpha subunit (Cereibacter sphaeroides (strain ATCC 17029 / ATH 2.4.9) (Rhodobacter sphaeroides)).